The primary structure comprises 231 residues: Enolase-phosphatase E1 (231 aa).

This sequence belongs to the HAD-like hydrolase superfamily. MasA/MtnC family. Monomer. Requires Mg(2+) as cofactor.

The catalysed reaction is 5-methylsulfanyl-2,3-dioxopentyl phosphate + H2O = 1,2-dihydroxy-5-(methylsulfanyl)pent-1-en-3-one + phosphate. The protein operates within amino-acid biosynthesis; L-methionine biosynthesis via salvage pathway; L-methionine from S-methyl-5-thio-alpha-D-ribose 1-phosphate: step 3/6. Its pathway is amino-acid biosynthesis; L-methionine biosynthesis via salvage pathway; L-methionine from S-methyl-5-thio-alpha-D-ribose 1-phosphate: step 4/6. In terms of biological role, bifunctional enzyme that catalyzes the enolization of 2,3-diketo-5-methylthiopentyl-1-phosphate (DK-MTP-1-P) into the intermediate 2-hydroxy-3-keto-5-methylthiopentenyl-1-phosphate (HK-MTPenyl-1-P), which is then dephosphorylated to form the acireductone 1,2-dihydroxy-3-keto-5-methylthiopentene (DHK-MTPene). This is Enolase-phosphatase E1 from Stenotrophomonas maltophilia (strain K279a).